Here is a 278-residue protein sequence, read N- to C-terminus: Phage-like element PBSX protein XkdB (278 aa).

Residues 58–80 constitute a DNA-binding region (H-T-H motif); it reads LKAREMAAVFGVSEKTVRRWLEL. 2 disordered regions span residues 117 to 136 and 239 to 278; these read SLKERPFSPQTPDTNDRTDI and QHERMKKHDKTNNRTDFGRAEKRETSITGGQTGRIRRKQV. Residues 248–263 are compositionally biased toward basic and acidic residues; the sequence is KTNNRTDFGRAEKRET.

The protein to B.subtilis YqaL.

This Bacillus subtilis (strain 168) protein is Phage-like element PBSX protein XkdB (xkdB).